The primary structure comprises 305 residues: MGIQPSPVLLASLGVGLFTLFGLALGTYLVRRSRRPQVTLQDPDEKYLLRLLDKTTVSHNTRRFRFALPTAHHILGLPVGKHVYLSARIDGSQVIRPYTPVTSDEDQGYVDLVIKVYLKGVHPKFSEGGKMSQYLDSLKIGDVVEFRGPSGLLSYAGKGNFNIQPNKKSPPELRVAKKLGMIAGGTGITPMLQLIRAILKVPEDPTQCFLLFANQTEKDIILREDLEELQAQYPIRFKLWFTLDYPPEDWTYSKGFVTADMIQEHLPAPAEDVLLLLCGPPPMVQLACHPNLDKLGYSQKMRFTY.

The helical transmembrane segment at 8–28 threads the bilayer; that stretch reads VLLASLGVGLFTLFGLALGTY. The FAD-binding FR-type domain occupies 44 to 156; the sequence is DEKYLLRLLD…RGPSGLLSYA (113 aa). FAD-binding positions include 136 to 166 and 175 to 210; these read DSLKIGDVVEFRGPSGLLSYAGKGNFNIQPN and VAKKLGMIAGGTGITPMLQLIRAILKVPEDPTQCFL.

It belongs to the flavoprotein pyridine nucleotide cytochrome reductase family. The cofactor is FAD.

It is found in the membrane. The enzyme catalyses 2 Fe(III)-[cytochrome b5] + NADH = 2 Fe(II)-[cytochrome b5] + NAD(+) + H(+). In terms of biological role, NADH-cytochrome b5 reductases are involved in desaturation and elongation of fatty acids, cholesterol biosynthesis, drug metabolism, and, in erythrocyte, methemoglobin reduction. This Rattus norvegicus (Rat) protein is NADH-cytochrome b5 reductase 1 (Cyb5r1).